Consider the following 230-residue polypeptide: Large ribosomal subunit protein uL4 (230 aa).

The tract at residues 51–105 (RAAARQGTHSTKTRGDVSGGGRKPYRQKGTGRARQGSMRAPQFTGGGIVHGPKLR) is disordered.

It belongs to the universal ribosomal protein uL4 family. As to quaternary structure, part of the 50S ribosomal subunit.

One of the primary rRNA binding proteins, this protein initially binds near the 5'-end of the 23S rRNA. It is important during the early stages of 50S assembly. It makes multiple contacts with different domains of the 23S rRNA in the assembled 50S subunit and ribosome. Functionally, forms part of the polypeptide exit tunnel. The protein is Large ribosomal subunit protein uL4 of Mycobacterium leprae (strain Br4923).